Here is a 249-residue protein sequence, read N- to C-terminus: Exosome complex component Rrp41 (249 aa).

It belongs to the RNase PH family. Rrp41 subfamily. As to quaternary structure, component of the archaeal exosome complex. Forms a hexameric ring-like arrangement composed of 3 Rrp41-Rrp42 heterodimers. The hexameric ring associates with a trimer of Rrp4 and/or Csl4 subunits.

It localises to the cytoplasm. In terms of biological role, catalytic component of the exosome, which is a complex involved in RNA degradation. Has 3'-&gt;5' exoribonuclease activity. Can also synthesize heteromeric RNA-tails. The protein is Exosome complex component Rrp41 of Thermococcus gammatolerans (strain DSM 15229 / JCM 11827 / EJ3).